A 347-amino-acid polypeptide reads, in one-letter code: Protease HtpX homolog (347 aa).

3 helical membrane passes run 8-28 (IAFGLYLLGYIVMIIVAVVIA), 46-66 (ALTAVLIVLTTAFVIYLIAIV), and 76-96 (WGFILGMIFFVVLMNLITYIA). Histidine 174 contributes to the Zn(2+) binding site. The active site involves glutamate 175. A Zn(2+)-binding site is contributed by histidine 178. The next 2 membrane-spanning stretches (helical) occupy residues 185–205 (ALMLLFGVLPSILYYLGVSSV) and 221–241 (LLAAVGILAVVVSFLVQLLVL). Glutamate 248 is a binding site for Zn(2+).

The protein belongs to the peptidase M48B family. Zn(2+) is required as a cofactor.

It is found in the cell membrane. In Pyrobaculum islandicum (strain DSM 4184 / JCM 9189 / GEO3), this protein is Protease HtpX homolog.